The chain runs to 104 residues: Large ribosomal subunit protein uL24 (104 aa).

Belongs to the universal ribosomal protein uL24 family. In terms of assembly, part of the 50S ribosomal subunit.

One of two assembly initiator proteins, it binds directly to the 5'-end of the 23S rRNA, where it nucleates assembly of the 50S subunit. Its function is as follows. One of the proteins that surrounds the polypeptide exit tunnel on the outside of the subunit. This Bartonella tribocorum (strain CIP 105476 / IBS 506) protein is Large ribosomal subunit protein uL24.